Consider the following 1364-residue polypeptide: Trifunctional purine biosynthetic protein adenosine-3 (1364 aa).

The region spanning 114–321 (KDFMLRHGIP…LFEVMQACCS (208 aa)) is the ATP-grasp domain. 140-202 (IRSAPYQALV…EELLEGEEIS (63 aa)) is an ATP binding site. Mn(2+) contacts are provided by Glu-291 and Asn-293. Positions 435–1154 (AIATAPGLSY…ARTQRMLSQP (720 aa)) are AIRS. A GART region spans residues 1155–1364 (RKRVAVLISG…EAPKDIKDSQ (210 aa)). Residue 1166–1168 (GSN) coordinates N(1)-(5-phospho-beta-D-ribosyl)glycinamide. Residues Arg-1221, 1246–1249 (MRIL), and Asn-1263 each bind (6R)-10-formyltetrahydrofolate. His-1265 (proton donor) is an active-site residue. A (6R)-10-formyltetrahydrofolate-binding site is contributed by 1297–1301 (DEGVD). 1327-1330 (HYAE) provides a ligand contact to N(1)-(5-phospho-beta-D-ribosyl)glycinamide.

This sequence in the N-terminal section; belongs to the GARS family. It in the central section; belongs to the AIR synthase family. In the C-terminal section; belongs to the GART family.

The catalysed reaction is 5-phospho-beta-D-ribosylamine + glycine + ATP = N(1)-(5-phospho-beta-D-ribosyl)glycinamide + ADP + phosphate + H(+). The enzyme catalyses 2-formamido-N(1)-(5-O-phospho-beta-D-ribosyl)acetamidine + ATP = 5-amino-1-(5-phospho-beta-D-ribosyl)imidazole + ADP + phosphate + H(+). It carries out the reaction N(1)-(5-phospho-beta-D-ribosyl)glycinamide + (6R)-10-formyltetrahydrofolate = N(2)-formyl-N(1)-(5-phospho-beta-D-ribosyl)glycinamide + (6S)-5,6,7,8-tetrahydrofolate + H(+). It functions in the pathway purine metabolism; IMP biosynthesis via de novo pathway; 5-amino-1-(5-phospho-D-ribosyl)imidazole from N(2)-formyl-N(1)-(5-phospho-D-ribosyl)glycinamide: step 2/2. It participates in purine metabolism; IMP biosynthesis via de novo pathway; N(1)-(5-phospho-D-ribosyl)glycinamide from 5-phospho-alpha-D-ribose 1-diphosphate: step 2/2. Its pathway is purine metabolism; IMP biosynthesis via de novo pathway; N(2)-formyl-N(1)-(5-phospho-D-ribosyl)glycinamide from N(1)-(5-phospho-D-ribosyl)glycinamide (10-formyl THF route): step 1/1. Functionally, trifunctional enzyme required for de novo purine biosynthesis. The sequence is that of Trifunctional purine biosynthetic protein adenosine-3 (ade3) from Drosophila pseudoobscura pseudoobscura (Fruit fly).